Reading from the N-terminus, the 706-residue chain is Integrator complex subunit 13 (706 aa).

The segment at 564–603 (PPEEEERKKRGRKREDKEDKSEKAVKDYEQEKSWQDSERL) is disordered. The stretch at 567–622 (EEERKKRGRKREDKEDKSEKAVKDYEQEKSWQDSERLKGILERGKEELAEAEIIKD) forms a coiled coil. Positions 572-582 (KRGRKREDKED) match the Nuclear localization signal (NLS) motif. A Glycyl lysine isopeptide (Lys-Gly) (interchain with G-Cter in SUMO2) cross-link involves residue K611. The span at 615-636 (AEAEIIKDSPDSPEPPNKKPLV) shows a compositional bias: basic and acidic residues. The tract at residues 615 to 650 (AEAEIIKDSPDSPEPPNKKPLVEMDETPQVEKSKGP) is disordered. Phosphoserine is present on residues S623, S626, and S678. The tract at residues 649-694 (GPVSLLSLWSNRINTANSRKHQEFAGRLNSVNNRAELYQHLKEENG) is cleavage module binding motif (CMBM).

The protein belongs to the Integrator subunit 13 family. As to quaternary structure, component of the Integrator complex, composed of core subunits INTS1, INTS2, INTS3, INTS4, INTS5, INTS6, INTS7, INTS8, INTS9/RC74, INTS10, INTS11/CPSF3L, INTS12, INTS13, INTS14 and INTS15. The core complex associates with protein phosphatase 2A subunits PPP2CA and PPP2R1A, to form the Integrator-PP2A (INTAC) complex. INTS13 is part of the tail subcomplex, composed of INTS10, INTS13, INTS14 and INTS15. Interacts with transcription factors ZNF609 and ZNF655. Interacts with PAFAH1B1; this interaction may be required for proper recruitment of dynein complexes to the nuclear envelope at prophase. Widely expressed. Tends to be up-regulated in seminomas compared to normal testis.

It is found in the nucleus. The protein localises to the cytoplasm. Component of the integrator complex, a multiprotein complex that terminates RNA polymerase II (Pol II) transcription in the promoter-proximal region of genes. The integrator complex provides a quality checkpoint during transcription elongation by driving premature transcription termination of transcripts that are unfavorably configured for transcriptional elongation: the complex terminates transcription by (1) catalyzing dephosphorylation of the C-terminal domain (CTD) of Pol II subunit POLR2A/RPB1 and SUPT5H/SPT5, (2) degrading the exiting nascent RNA transcript via endonuclease activity and (3) promoting the release of Pol II from bound DNA. The integrator complex is also involved in terminating the synthesis of non-coding Pol II transcripts, such as enhancer RNAs (eRNAs), small nuclear RNAs (snRNAs), telomerase RNAs and long non-coding RNAs (lncRNAs). Within the integrator complex, INTS13 is part of the integrator tail module and acts as a platform for the recruitment of transcription factors at promoters. At prophase, mediates recruitment of cytoplasmic dynein to the nuclear envelope, a step important for proper centrosome-nucleus coupling. At G2/M phase, may be required for proper spindle formation and execution of cytokinesis. In Homo sapiens (Human), this protein is Integrator complex subunit 13.